Reading from the N-terminus, the 294-residue chain is 33 kDa chaperonin (294 aa).

Cystine bridges form between cysteine 238-cysteine 240 and cysteine 271-cysteine 274.

It belongs to the HSP33 family. Under oxidizing conditions two disulfide bonds are formed involving the reactive cysteines. Under reducing conditions zinc is bound to the reactive cysteines and the protein is inactive.

The protein resides in the cytoplasm. In terms of biological role, redox regulated molecular chaperone. Protects both thermally unfolding and oxidatively damaged proteins from irreversible aggregation. Plays an important role in the bacterial defense system toward oxidative stress. The chain is 33 kDa chaperonin from Clostridium tetani (strain Massachusetts / E88).